Reading from the N-terminus, the 193-residue chain is GTP cyclohydrolase 1 (193 aa).

Positions 83, 86, and 154 each coordinate Zn(2+).

It belongs to the GTP cyclohydrolase I family. In terms of assembly, homomer.

It carries out the reaction GTP + H2O = 7,8-dihydroneopterin 3'-triphosphate + formate + H(+). Its pathway is cofactor biosynthesis; 7,8-dihydroneopterin triphosphate biosynthesis; 7,8-dihydroneopterin triphosphate from GTP: step 1/1. The protein is GTP cyclohydrolase 1 of Porphyromonas gingivalis (strain ATCC 33277 / DSM 20709 / CIP 103683 / JCM 12257 / NCTC 11834 / 2561).